Reading from the N-terminus, the 241-residue chain is 2,3,4,5-tetrahydropyridine-2,6-dicarboxylate N-acetyltransferase (241 aa).

Belongs to the transferase hexapeptide repeat family. DapH subfamily.

It carries out the reaction (S)-2,3,4,5-tetrahydrodipicolinate + acetyl-CoA + H2O = L-2-acetamido-6-oxoheptanedioate + CoA. Its pathway is amino-acid biosynthesis; L-lysine biosynthesis via DAP pathway; LL-2,6-diaminopimelate from (S)-tetrahydrodipicolinate (acetylase route): step 1/3. Catalyzes the transfer of an acetyl group from acetyl-CoA to tetrahydrodipicolinate. This is 2,3,4,5-tetrahydropyridine-2,6-dicarboxylate N-acetyltransferase from Caldanaerobacter subterraneus subsp. tengcongensis (strain DSM 15242 / JCM 11007 / NBRC 100824 / MB4) (Thermoanaerobacter tengcongensis).